A 793-amino-acid chain; its full sequence is Putative glutamate--cysteine ligase 2-3 (793 aa).

The tract at residues 1-407 is carboxylate-amine ligase; that stretch reads MLASDPRKVG…RFWDRGDTAD (407 aa). Residues 367–390 are disordered; that stretch reads TEHLPDVEVPPPREPGPKSTGAGR. The peptidase M20 stretch occupies residues 408–793; it reads MTWTESTELD…ALTRLEDQSG (386 aa).

It in the C-terminal section; belongs to the glutamate--cysteine ligase type 2 family. YbdK subfamily.

The enzyme catalyses L-cysteine + L-glutamate + ATP = gamma-L-glutamyl-L-cysteine + ADP + phosphate + H(+). Its function is as follows. ATP-dependent carboxylate-amine ligase which exhibits weak glutamate--cysteine ligase activity. The protein is Putative glutamate--cysteine ligase 2-3 of Rhodococcus jostii (strain RHA1).